The chain runs to 218 residues: NAD(P)H-quinone oxidoreductase subunit I (218 aa).

4Fe-4S ferredoxin-type domains are found at residues 55–84 (GRIH…VDWV) and 95–124 (RNYS…MTEE). [4Fe-4S] cluster is bound by residues Cys64, Cys67, Cys70, Cys74, Cys104, Cys107, Cys110, and Cys114. Residues 192–218 (LSLQQDSLQGDEGESLQDAPDQDQPKG) form a disordered region.

This sequence belongs to the complex I 23 kDa subunit family. NDH-1 is composed of at least 11 different subunits. The cofactor is [4Fe-4S] cluster.

It localises to the cellular thylakoid membrane. The catalysed reaction is a plastoquinone + NADH + (n+1) H(+)(in) = a plastoquinol + NAD(+) + n H(+)(out). It carries out the reaction a plastoquinone + NADPH + (n+1) H(+)(in) = a plastoquinol + NADP(+) + n H(+)(out). Its function is as follows. NDH-1 shuttles electrons from an unknown electron donor, via FMN and iron-sulfur (Fe-S) centers, to quinones in the respiratory and/or the photosynthetic chain. The immediate electron acceptor for the enzyme in this species is believed to be plastoquinone. Couples the redox reaction to proton translocation, and thus conserves the redox energy in a proton gradient. In Prochlorococcus marinus (strain MIT 9303), this protein is NAD(P)H-quinone oxidoreductase subunit I.